The chain runs to 273 residues: Protein INAPERTURATE POLLEN1 (273 aa).

Residues 12-267 (SRRFNDFYED…KDQILLQDFE (256 aa)) enclose the DOG1 domain.

As to expression, expressed only in anthers and in pollen. Not detected in other flower tissues, stems, leaves and siliques.

The protein resides in the cytoplasm. Required for the formation of pollen surface apertures, which arise by restriction of exine deposition at specific sites. The aperture length depends on the INP1 dosage. Does not play a role in specifying the number or position of apertures. Acts in a sporophytic manner. This is Protein INAPERTURATE POLLEN1 from Arabidopsis thaliana (Mouse-ear cress).